Here is a 239-residue protein sequence, read N- to C-terminus: Putative zinc finger protein 132L (239 aa).

The disordered stretch occupies residues 20–40; that stretch reads DASLSTKSPKREPSQEKEIKK. Positions 28 to 40 are enriched in basic and acidic residues; that stretch reads PKREPSQEKEIKK. 2 consecutive C3H1-type zinc fingers follow at residues 44–68 and 81–106; these read IKKNKPCKYEEECKRSDCVFLHPGE and RRKTRMCKYVKKCNKGKNCPFAHDES. The segment at 128-151 is disordered; the sequence is PGECKFSHPPPPPPSPPSPPPKEE. The segment covering 135–147 has biased composition (pro residues); it reads HPPPPPPSPPSPP.

The polypeptide is Putative zinc finger protein 132L (Acheta domesticus (House cricket)).